Reading from the N-terminus, the 177-residue chain is Ribosome maturation factor RimM (177 aa).

The 74-residue stretch at 98–171 folds into the PRC barrel domain; that stretch reads GETIFLSEIK…AVVMDLPEGL (74 aa).

This sequence belongs to the RimM family. As to quaternary structure, binds ribosomal protein uS19.

Its subcellular location is the cytoplasm. Functionally, an accessory protein needed during the final step in the assembly of 30S ribosomal subunit, possibly for assembly of the head region. Essential for efficient processing of 16S rRNA. May be needed both before and after RbfA during the maturation of 16S rRNA. It has affinity for free ribosomal 30S subunits but not for 70S ribosomes. This chain is Ribosome maturation factor RimM, found in Bdellovibrio bacteriovorus (strain ATCC 15356 / DSM 50701 / NCIMB 9529 / HD100).